We begin with the raw amino-acid sequence, 129 residues long: HTH-type transcriptional regulator GlnR (129 aa).

An HTH merR-type domain is found at 10 to 78 (LFPIGIVMDL…MAGIKQVLLM (69 aa)). A DNA-binding region (H-T-H motif) is located at residues 13-32 (IGIVMDLTQLSARQIRYYEE).

As to quaternary structure, homodimer under conditions of nitrogen excess. Monomer under conditions of nitrogen-limited. Interacts with feedback-inhibited GlnA in order to stabilizes GlnR-DNA complex.

Under conditions of nitrogen excess, the DNA binding activity of GlnR is activated by a transient interaction with feedback-inhibited GlnA. Under conditions of nitrogen-limited, GlnR is autoinhibited by its C-terminal region. In terms of biological role, transcription repressor during nitrogen excess. On the contrary of the MerR members, which require longer DNA sites for high-affinity binding, GlnR requires a DNA sequence of 17 nucleotides as minimal binding site. The polypeptide is HTH-type transcriptional regulator GlnR (Bacillus anthracis).